Reading from the N-terminus, the 370-residue chain is Putative methylthioribose-1-phosphate isomerase (370 aa).

Substrate-binding positions include 66–68, R109, and Q217; that span reads RGA. D258 serves as the catalytic Proton donor. Substrate is bound at residue 268–269; sequence NK.

The protein belongs to the eIF-2B alpha/beta/delta subunits family. MtnA subfamily.

The catalysed reaction is 5-(methylsulfanyl)-alpha-D-ribose 1-phosphate = 5-(methylsulfanyl)-D-ribulose 1-phosphate. Its function is as follows. Catalyzes the interconversion of methylthioribose-1-phosphate (MTR-1-P) into methylthioribulose-1-phosphate (MTRu-1-P). This Aeropyrum pernix (strain ATCC 700893 / DSM 11879 / JCM 9820 / NBRC 100138 / K1) protein is Putative methylthioribose-1-phosphate isomerase.